The following is a 757-amino-acid chain: Mitofusin-2 (757 aa).

Topologically, residues 1–604 (MSLLFSRCNS…TQEELMVSMV (604 aa)) are cytoplasmic. A part of a helix bundle domain, formed by helices from N-terminal and C-terminal regions region spans residues 30–94 (KHFVTAKKKI…VRGISEVLAR (65 aa)). Residues 93-342 (ARRHMKVAFF…VRMFEFQNFE (250 aa)) enclose the Dynamin-type G domain. The G1 motif stretch occupies residues 103–110 (GRTSNGKS). 106–111 (SNGKST) provides a ligand contact to GTP. Threonine 111 bears the Phosphothreonine; by PINK1 mark. The G2 motif stretch occupies residues 129–130 (TT). Positions 199 to 202 (DSPG) are G3 motif. 258 to 261 (NRWD) contacts GTP. The segment at 258–261 (NRWD) is G4 motif. Residue glutamate 288 is a region of interest, G5 motif. GTP contacts are provided by serine 305 and lysine 307. The part of a helix bundle domain, formed by helices from N-terminal and C-terminal regions stretch occupies residues 359–385 (EQHTVRAKQIAEAVRLIMDSLHIAAQE). The stretch at 406–435 (KQLELLAQDYKLRIKQMTEEVERQVSTAMA) forms a coiled coil. Serine 442 carries the post-translational modification Phosphoserine; by PINK1. A helical transmembrane segment spans residues 605–625 (TGLASLTSRTSMGILVVGGVV). A topological domain (mitochondrial intermembrane) is located at residue tryptophan 626. The chain crosses the membrane as a helical span at residues 627–647 (KAVGWRLIALSFGLYGLLYVY). At 648-757 (ERLTWTTRAK…FIHQYLQPSR (110 aa)) the chain is on the cytoplasmic side. A coiled-coil region spans residues 696-738 (FAHLCQQVDITRDNLEQEIAAMNKKVEALDSLQSKAKLLRNKA). The segment at 722-753 (EALDSLQSKAKLLRNKAGWLDSELNMFIHQYL) is part of a helix bundle domain, formed by helices from N-terminal and C-terminal regions.

Belongs to the TRAFAC class dynamin-like GTPase superfamily. Dynamin/Fzo/YdjA family. Mitofusin subfamily. Forms homomultimers and heteromultimers with MFN1. Oligomerization is essential for mitochondrion fusion. Interacts with VAT1. Interacts with STOML2; may form heterooligomers. Interacts (phosphorylated) with PRKN. Interacts with EIF2AK3. Interacts with THG1L; THG1L probably functions as a guanyl-nucleotide exchange factor/GEF, activating MFN2. In terms of processing, phosphorylated by PINK1. Ubiquitinated by non-degradative ubiquitin by PRKN, promoting mitochondrial fusion; deubiquitination by USP30 inhibits mitochondrial fusion. Ubiquitinated by HUWE1 when dietary stearate (C18:0) levels are low; ubiquitination inhibits mitochondrial fusion. Ubiquitous. In brain, it is more expressed than MFN1, while it is expressed at a weaker level than MFN1 in heart and testis. Expressed at high level in elongating spermatids of seminiferous tubules. Expression is markedly down-regulated in highly proliferative vascular smooth muscle cells (VSMCs) from the genetic hypertensive animal model SHR, as well as in balloon-injured Wistar Kyoto arteries.

The protein localises to the mitochondrion outer membrane. The enzyme catalyses GTP + H2O = GDP + phosphate + H(+). Mitochondrial outer membrane GTPase that mediates mitochondrial clustering and fusion. Mitochondria are highly dynamic organelles, and their morphology is determined by the equilibrium between mitochondrial fusion and fission events. Overexpression induces the formation of mitochondrial networks. Membrane clustering requires GTPase activity and may involve a major rearrangement of the coiled coil domains. Plays a central role in mitochondrial metabolism and may be associated with obesity and/or apoptosis processes. Plays an important role in the regulation of vascular smooth muscle cell proliferation. Involved in the clearance of damaged mitochondria via selective autophagy (mitophagy). Is required for PRKN recruitment to dysfunctional mitochondria. Involved in the control of unfolded protein response (UPR) upon ER stress including activation of apoptosis and autophagy during ER stress. Acts as an upstream regulator of EIF2AK3 and suppresses EIF2AK3 activation under basal conditions. The sequence is that of Mitofusin-2 (Mfn2) from Rattus norvegicus (Rat).